The sequence spans 838 residues: MDGDGLGRLIGSEIHGFHTLQDLDVQTMLEEAKSRWLRPNEIHAILCGRIILFDRKMLRNFRKDGHNWKKKKDGRTVKEAHEHLKVGNEERIHVYYAHGEDNTTFVRRCYWLLDKARENIVLVHYRDTQEAATTSGDSISSPISVSEQTFPNRVAAEDIDTVVRNHDISLHDINTLDWDELLVPTDLNNQSAPTVDNLSYFTEPLQNAANGTAEHGNATVADGSLDALLNDGPQSRESFGRWMNSFISESNGSLEDPSFEPMVMPRQDPLAPQAVFHSHSNIPEQVFNITDVSPAWAYSSEKTKILVTGFLHDSYQHLERSNLYCVCGDFCVPAEYLQAGVYRCIIPPHSPGMVNLYLSADGHKPISQCFRFEHRAVPVLDKTVPEDNQDSKWEEFEFQVRLSHLLFTSSNKLNVLSSKISPHNLRDAKKLASKTNHLLNSWAYLVKSIQGNKVSFDQAKDHLFELSLKNRLKEWLMEKVLEGRNTLDYDSKGLGVIHLCASLGYTWSVQLFSLSGLSLNFRDKQGWTALHWAAYYGREKMVAALLSAGARPNLVTDSTKDNLGGCMAADLAQQNGYDGLAAYLAEKCLVAQFRDMKIAGNITGDLEACKAEMLNQGTLPEDEQSLKDALAAYRTAAEAAARIQGAFREKALKAARSSVIQFANKEEEAKSIIAAMKIQNAFRKYDTRRKIEAAYRIQCRFQTWKIRREYLNMRRQAIRIQAAFRGLQARRQYKKILWSVGVLEKAVLRWRQKRKGFRGLQVAAEEDSPGEAQEDFYKTSQRQAEERLERSVVRVQAMFRSKKAQQDYRRMKLTHEEAQVNHLTFLNLSFGKKNSNRR.

Positions 25–134 (VQTMLEEAKS…YRDTQEAATT (110 aa)) form a DNA-binding region, CG-1. The ANK repeat unit spans residues 525–554 (QGWTALHWAAYYGREKMVAALLSAGARPNL). 3 consecutive IQ domains span residues 671 to 700 (SIIA…IQCR), 713 to 742 (MRRQ…SVGV), and 788 to 817 (LERS…THEE). The calmodulin-binding stretch occupies residues 738 to 760 (WSVGVLEKAVLRWRQKRKGFRGL). The stretch at 802-822 (KKAQQDYRRMKLTHEEAQVNH) forms a coiled coil.

It belongs to the CAMTA family. Expressed in roots, stems, leaves, sepals, petals, stamen filaments, top of carpels, anthers and siliques, but not in stigmas.

It localises to the nucleus. Its function is as follows. Transcription activator that binds calmodulin in a calcium-dependent manner in vitro. Binds to the DNA consensus sequence 5'-[ACG]CGCG[GTC]-3'. Regulates transcriptional activity in response to calcium signals. This is Calmodulin-binding transcription activator 6 from Arabidopsis thaliana (Mouse-ear cress).